The following is a 506-amino-acid chain: uncharacterized protein (506 aa).

An ATP-binding site is contributed by 282-289; that stretch reads GIQGTGKS.

This sequence belongs to the AAA ATPase family. Highly divergent.

Its subcellular location is the plastid. It localises to the chloroplast. This is an uncharacterized protein from Guillardia theta (Cryptophyte).